The following is a 368-amino-acid chain: Galanin receptor type 3 (368 aa).

The Extracellular segment spans residues 1–20 (MADAQNISLDSPGSVGAVAV). Asn-6 carries an N-linked (GlcNAc...) asparagine glycan. A helical transmembrane segment spans residues 21–41 (PVVFALIFLLGTVGNGLVLAV). At 42 to 57 (LLQPGPSAWQEPGSTT) the chain is on the cytoplasmic side. Residues 58 to 78 (DLFILNLAVADLCFILCCVPF) traverse the membrane as a helical segment. The Extracellular portion of the chain corresponds to 79–96 (QATIYTLDAWLFGALVCK). The cysteines at positions 95 and 172 are disulfide-linked. The helical transmembrane segment at 97-118 (AVHLLIYLTMYASSFTLAAVSV) threads the bilayer. Residues 119–138 (DRYLAVRHPLRSRALRTPRN) are Cytoplasmic-facing. A helical transmembrane segment spans residues 139–159 (ARAAVGLVWLLAALFSAPYLS). Over 160 to 184 (YYGTVRYGALELCVPAWEDARRRAL) the chain is Extracellular. A helical transmembrane segment spans residues 185 to 205 (DVATFAAGYLLPVAVVSLAYG). Over 206–236 (RTLRFLWAAVGPAGAAAAEARRRATGRAGRA) the chain is Cytoplasmic. The helical transmembrane segment at 237–257 (MLAVAALYALCWGPHHALILC) threads the bilayer. At 258–259 (FW) the chain is on the extracellular side. A helical transmembrane segment spans residues 260 to 280 (YGRFAFSPATYACRLASHCLA). The Cytoplasmic segment spans residues 281–368 (YANSCLNPLV…HGGEAARGPE (88 aa)). Residue Cys-308 is the site of S-palmitoyl cysteine attachment. Residues 317-368 (RRALRRVRPASSGPPGCPGDARPSGRLLAGGGQGPEPREGPVHGGEAARGPE) are disordered.

Belongs to the G-protein coupled receptor 1 family.

The protein localises to the cell membrane. Its function is as follows. Receptor for the hormone galanin. Receptor for the hormone spexin-1. The sequence is that of Galanin receptor type 3 (GALR3) from Homo sapiens (Human).